A 163-amino-acid chain; its full sequence is Small ribosomal subunit protein bS18c (163 aa).

Disordered stretches follow at residues 1–52 (MYIS…IGPG) and 144–163 (NLRNSNQNLRNNNRNLSSDC). A compositionally biased stretch (basic residues) spans 7–48 (PFRKSKQPFRKSKQPFHKSKQPFRKFKQPFRKSKQPFRRRSR).

This sequence belongs to the bacterial ribosomal protein bS18 family. Part of the 30S ribosomal subunit.

It is found in the plastid. Its subcellular location is the chloroplast. The polypeptide is Small ribosomal subunit protein bS18c (Saccharum hybrid (Sugarcane)).